The primary structure comprises 351 residues: Ferredoxin--NADP reductase (351 aa).

Residues threonine 14, aspartate 33, glutamine 41, tyrosine 46, alanine 86, phenylalanine 121, aspartate 287, and threonine 328 each coordinate FAD.

It belongs to the ferredoxin--NADP reductase type 2 family. In terms of assembly, homodimer. It depends on FAD as a cofactor.

The enzyme catalyses 2 reduced [2Fe-2S]-[ferredoxin] + NADP(+) + H(+) = 2 oxidized [2Fe-2S]-[ferredoxin] + NADPH. The protein is Ferredoxin--NADP reductase of Flavobacterium psychrophilum (strain ATCC 49511 / DSM 21280 / CIP 103535 / JIP02/86).